Here is a 458-residue protein sequence, read N- to C-terminus: Phosphoglucosamine mutase (458 aa).

Serine 100 acts as the Phosphoserine intermediate in catalysis. The Mg(2+) site is built by serine 100, aspartate 239, aspartate 241, and aspartate 243. Serine 100 is modified (phosphoserine).

It belongs to the phosphohexose mutase family. It depends on Mg(2+) as a cofactor. Activated by phosphorylation.

It carries out the reaction alpha-D-glucosamine 1-phosphate = D-glucosamine 6-phosphate. Its function is as follows. Catalyzes the conversion of glucosamine-6-phosphate to glucosamine-1-phosphate. In Dictyoglomus thermophilum (strain ATCC 35947 / DSM 3960 / H-6-12), this protein is Phosphoglucosamine mutase.